Consider the following 540-residue polypeptide: Membrane protein insertase YidC (540 aa).

5 helical membrane passes run 1 to 21 (MVVQNNFLFIAFIFVTFMMLD), 351 to 371 (NWGISIIIITFMVRGIMFPLT), 418 to 438 (LGGCMPLIIQMPIFLALYYML), 464 to 484 (ILPIIMGITMFLIQKISPSSI), and 497 to 517 (PLIFTIFFLWFPSGLVLYYII).

It belongs to the OXA1/ALB3/YidC family. Type 1 subfamily. As to quaternary structure, interacts with the Sec translocase complex via SecD. Specifically interacts with transmembrane segments of nascent integral membrane proteins during membrane integration.

Its subcellular location is the cell membrane. In terms of biological role, required for the insertion and/or proper folding and/or complex formation of integral membrane proteins into the membrane. Involved in integration of membrane proteins that insert both dependently and independently of the Sec translocase complex, as well as at least some lipoproteins. Aids folding of multispanning membrane proteins. The polypeptide is Membrane protein insertase YidC (Wigglesworthia glossinidia brevipalpis).